Here is a 569-residue protein sequence, read N- to C-terminus: 2-succinyl-5-enolpyruvyl-6-hydroxy-3-cyclohexene-1-carboxylate synthase (569 aa).

The protein belongs to the TPP enzyme family. MenD subfamily. In terms of assembly, homodimer. Requires Mg(2+) as cofactor. It depends on Mn(2+) as a cofactor. Thiamine diphosphate serves as cofactor.

It catalyses the reaction isochorismate + 2-oxoglutarate + H(+) = 5-enolpyruvoyl-6-hydroxy-2-succinyl-cyclohex-3-ene-1-carboxylate + CO2. It functions in the pathway quinol/quinone metabolism; 1,4-dihydroxy-2-naphthoate biosynthesis; 1,4-dihydroxy-2-naphthoate from chorismate: step 2/7. It participates in quinol/quinone metabolism; menaquinone biosynthesis. Catalyzes the thiamine diphosphate-dependent decarboxylation of 2-oxoglutarate and the subsequent addition of the resulting succinic semialdehyde-thiamine pyrophosphate anion to isochorismate to yield 2-succinyl-5-enolpyruvyl-6-hydroxy-3-cyclohexene-1-carboxylate (SEPHCHC). This chain is 2-succinyl-5-enolpyruvyl-6-hydroxy-3-cyclohexene-1-carboxylate synthase, found in Haemophilus ducreyi (strain 35000HP / ATCC 700724).